A 273-amino-acid polypeptide reads, in one-letter code: Outer surface protein A (273 aa).

An N-terminal signal peptide occupies residues 1 to 16 (MKKYLLGIGLILALIA). The N-palmitoyl cysteine moiety is linked to residue C17. Residue C17 is the site of S-diacylglycerol cysteine attachment.

It belongs to the OspA lipoprotein family.

The protein resides in the cell outer membrane. It localises to the cell surface. The polypeptide is Outer surface protein A (Borreliella burgdorferi (Lyme disease spirochete)).